Consider the following 859-residue polypeptide: Linoleate 9S-lipoxygenase 1 (859 aa).

Residues 21–161 (VKGTVVLMKK…HYTTDRVFFS (141 aa)) form the PLAT domain. The 696-residue stretch at 164 to 859 (TYLPHETPAT…GRGIPNSVSI (696 aa)) folds into the Lipoxygenase domain. Positions 213-246 (KNPRPVLGGTQEYPYPRRGRTGRKPTKEDPQTES) are disordered. 5 residues coordinate Fe cation: His519, His524, His711, Asn715, and Ile859.

This sequence belongs to the lipoxygenase family. In terms of assembly, monomer. Fe cation serves as cofactor. In terms of tissue distribution, seedlings, roots, leaves, and flowers (at protein level). Expressed in guard cells.

It localises to the cytoplasm. It catalyses the reaction (9Z,12Z)-octadecadienoate + O2 = (9S)-hydroperoxy-(10E,12Z)-octadecadienoate. The catalysed reaction is (9Z,12Z,15Z)-octadecatrienoate + O2 = (9S)-hydroperoxy-(10E,12Z,15Z)-octadecatrienoate. Its pathway is lipid metabolism; oxylipin biosynthesis. Functionally, 9S-lipoxygenase that can use linoleic acid or linolenic acid as substrates. Plant lipoxygenases may be involved in a number of diverse aspects of plant physiology including growth and development, pest resistance, and senescence or responses to wounding. Catalyzes the hydroperoxidation of lipids containing a cis,cis-1,4-pentadiene structure. Function as regulators of root development by controlling the emergence of lateral roots. 9S-lypoxygenase-derived oxylipins may play an antagonistic role to ethylene signaling in the control of responses involving oxidative stress, lipid peroxidation and plant defense. LOX1-derived oxylipins may be involved in stress signaling from roots to shoots in response to cadmium exposure. 9S-lypoxygenase-derived oxylipins are engaged during infection to control the balance between salicylic acid (SA) and jasmonate (JA) signaling to facilitate infection by the fungal pathogen Fusarium graminearum. 9S-lypoxygenase-derived oxylipins activate brassinosteroid signaling to promote cell wall-based defense and limit pathogen infection. The LOX1-derived compound (9S)-hydroperoxy-(10E,12Z,15Z)-octadecatrienoate protects plant tissues against infection by the bacterial pathogen Pseudomonas syringae pv tomato DC3000. The LOX1-derived oxylipins are required to trigger stomatal closure in response to both infection by the bacterial pathogen Pseudomonas syringae pv tomato DC3000, and the pathogen-associated molecular pattern (PAMP) flagellin peptide flg22. Contributes to the oxidation of free fatty acids during seed aging. The chain is Linoleate 9S-lipoxygenase 1 from Arabidopsis thaliana (Mouse-ear cress).